The primary structure comprises 166 residues: Large ribosomal subunit protein mL49 (166 aa).

The disordered stretch occupies residues 56–78; the sequence is RIPDPPKHEHYPTPSGWQPPRDP.

Belongs to the mitochondrion-specific ribosomal protein mL49 family. In terms of assembly, component of the mitochondrial large ribosomal subunit (mt-LSU). Mature mammalian 55S mitochondrial ribosomes consist of a small (28S) and a large (39S) subunit. The 28S small subunit contains a 12S ribosomal RNA (12S mt-rRNA) and 30 different proteins. The 39S large subunit contains a 16S rRNA (16S mt-rRNA), a copy of mitochondrial valine transfer RNA (mt-tRNA(Val)), which plays an integral structural role, and 52 different proteins. Interacts with OXA1L. In terms of tissue distribution, ubiquitous.

The protein resides in the mitochondrion. The polypeptide is Large ribosomal subunit protein mL49 (MRPL49) (Homo sapiens (Human)).